We begin with the raw amino-acid sequence, 319 residues long: D-alanine--D-alanine ligase (319 aa).

An ATP-grasp domain is found at 109–313 (KRVWLAEGLP…YEQLCLHILQ (205 aa)). Residue 139–194 (PDDLGLPLIVKPPREGSSIGVTKVLGYSQMQDAVALSARHDPDVLCEEFIDGAEVT) coordinates ATP. 3 residues coordinate Mg(2+): D266, E280, and N282.

The protein belongs to the D-alanine--D-alanine ligase family. It depends on Mg(2+) as a cofactor. The cofactor is Mn(2+).

It localises to the cytoplasm. It carries out the reaction 2 D-alanine + ATP = D-alanyl-D-alanine + ADP + phosphate + H(+). It functions in the pathway cell wall biogenesis; peptidoglycan biosynthesis. Cell wall formation. In Methylibium petroleiphilum (strain ATCC BAA-1232 / LMG 22953 / PM1), this protein is D-alanine--D-alanine ligase.